The sequence spans 173 residues: NADH-ubiquinone oxidoreductase chain 6 (173 aa).

The next 5 membrane-spanning stretches (helical) occupy residues 1–21, 27–47, 48–68, 87–107, and 139–159; these read MTYFMLFLGLCFVLGGLAVAS, YGVVGLVLASVVGCGWLMSLG, MSFVSLVLFMVYLGGMLVVFV, VVGYGVSFIVVLAAGAVVGGL, and CGVGMFLVAGWGLLLTLFVVL.

The protein belongs to the complex I subunit 6 family.

It localises to the mitochondrion membrane. It catalyses the reaction a ubiquinone + NADH + 5 H(+)(in) = a ubiquinol + NAD(+) + 4 H(+)(out). In terms of biological role, core subunit of the mitochondrial membrane respiratory chain NADH dehydrogenase (Complex I) that is believed to belong to the minimal assembly required for catalysis. Complex I functions in the transfer of electrons from NADH to the respiratory chain. The immediate electron acceptor for the enzyme is believed to be ubiquinone. The chain is NADH-ubiquinone oxidoreductase chain 6 (MT-ND6) from Synthliboramphus antiquus (Ancient murrelet).